The chain runs to 161 residues: Protein-export protein SecB (161 aa).

This sequence belongs to the SecB family. As to quaternary structure, homotetramer, a dimer of dimers. One homotetramer interacts with 1 SecA dimer.

Its subcellular location is the cytoplasm. Its function is as follows. One of the proteins required for the normal export of preproteins out of the cell cytoplasm. It is a molecular chaperone that binds to a subset of precursor proteins, maintaining them in a translocation-competent state. It also specifically binds to its receptor SecA. The chain is Protein-export protein SecB from Shewanella baltica (strain OS223).